Reading from the N-terminus, the 123-residue chain is Histone H2B.1, embryonic (123 aa).

Residues 1–32 (MAPTGQVAKKGSKKAVKPPRASGGKKRHRKRK) form a disordered region. The span at 10–32 (KGSKKAVKPPRASGGKKRHRKRK) shows a compositional bias: basic residues. The O-linked (GlcNAc) serine glycan is linked to Ser110. Lys118 is covalently cross-linked (Glycyl lysine isopeptide (Lys-Gly) (interchain with G-Cter in ubiquitin)).

It belongs to the histone H2B family. In terms of assembly, the nucleosome is a histone octamer containing two molecules each of H2A, H2B, H3 and H4 assembled in one H3-H4 heterotetramer and two H2A-H2B heterodimers. The octamer wraps approximately 147 bp of DNA. In terms of processing, monoubiquitination of Lys-118 gives a specific tag for epigenetic transcriptional activation and is also prerequisite for histone H3 'Lys-4' and 'Lys-79' methylation. Post-translationally, glcNAcylation at Ser-110 promotes monoubiquitination of Lys-118. It fluctuates in response to extracellular glucose, and associates with transcribed genes.

Its subcellular location is the nucleus. It is found in the chromosome. Functionally, core component of nucleosome. Nucleosomes wrap and compact DNA into chromatin, limiting DNA accessibility to the cellular machineries which require DNA as a template. Histones thereby play a central role in transcription regulation, DNA repair, DNA replication and chromosomal stability. DNA accessibility is regulated via a complex set of post-translational modifications of histones, also called histone code, and nucleosome remodeling. The protein is Histone H2B.1, embryonic of Psammechinus miliaris (Green sea urchin).